The primary structure comprises 235 residues: Large ribosomal subunit protein uL3 (235 aa).

A disordered region spans residues 150 to 189 (AGGPASHGSGHHRHAGSTGMRSTPGRGLPGGKKAGQMGNE).

Belongs to the universal ribosomal protein uL3 family. As to quaternary structure, part of the 50S ribosomal subunit. Forms a cluster with proteins L14 and L19.

Its function is as follows. One of the primary rRNA binding proteins, it binds directly near the 3'-end of the 23S rRNA, where it nucleates assembly of the 50S subunit. In Protochlamydia amoebophila (strain UWE25), this protein is Large ribosomal subunit protein uL3.